Reading from the N-terminus, the 465-residue chain is Alpha-galacturonidase (465 aa).

11-78 (ITIAYIGGGS…GKWLYKACET (68 aa)) contributes to the NAD(+) binding site. Asn157 serves as a coordination point for substrate. Residue Cys179 coordinates Mn(2+). Residue His180 is the Proton donor of the active site. His216 is a binding site for Mn(2+).

Belongs to the glycosyl hydrolase 4 family. Homotetramer. NAD(+) is required as a cofactor. Mn(2+) serves as cofactor.

The enzyme catalyses [(1-&gt;4)-alpha-D-galacturonosyl](n) + H2O = alpha-D-galacturonate + [(1-&gt;4)-alpha-D-galacturonosyl](n-1). Alpha-galacturonidase able to catalyze the hydrolysis of the chromogenic substrate p-nitrophenyl-alpha-D-galacturonic acid (pNPalphaGalUA). It is probable that alpha-1,4-di-galacturonate (GalUA(2)) is the naturally occurring substrate. This is Alpha-galacturonidase from Thermoanaerobacterium saccharolyticum (strain DSM 8691 / JW/SL-YS485).